We begin with the raw amino-acid sequence, 249 residues long: Ribitol 2-dehydrogenase (249 aa).

20-43 (TGAASGIGLECARTLLGAGAKVVL) is an NAD(+) binding site. Catalysis depends on Tyr160, which acts as the Proton acceptor.

The protein belongs to the short-chain dehydrogenases/reductases (SDR) family. Homotetramer.

The enzyme catalyses ribitol + NAD(+) = D-ribulose + NADH + H(+). This is Ribitol 2-dehydrogenase (rbtD) from Klebsiella aerogenes (Enterobacter aerogenes).